Reading from the N-terminus, the 465-residue chain is MVRQIKILPKHSIGHNFSGFDKSYPEELYSSLPIIEYTQIIDYINLKTQRDYKSYILYMIIFAIFGLLPFLIALIFELFRSSLYKNRFERDFDNCLKQINELIKCRNVTFSFKFTSKIRKMQKLELIISYQDEQPKKEIVGDFIVSPEGRNILVLPPAPLDLINFDQLYLSSSQSNKFNKSKKSNKINDKTPILNNNNNNNNNNNIINYCKTKINYNNSERKTNGLKDDNFYGFKDTNYDKDLYNFMLESEYQSMIREFNTVLVRKIDIKKQLIFLLVSTILLIALIGFILIIPAAILYSKKRSHYYTHLYNDLNIMVHKYSSIYNSRGITISYCFENSDDFNNDSSPLINILIIYPKAPKGSPILTNFTNNTHQWILVPTSPNAIAPYFTILNNMAYNNNNSIIENNFNNNYNNSNNNNNSNNSNSNNNNNNNNNNNNYNNNNYNNNNNQVQVYQTEQTLNYNI.

A helical transmembrane segment spans residues I56–F76. Residues K177–N198 form a disordered region. The helical transmembrane segment at L273–I293 threads the bilayer. A disordered region spans residues N411–N449.

The protein resides in the membrane. This is an uncharacterized protein from Dictyostelium discoideum (Social amoeba).